The chain runs to 457 residues: tRNA-2-methylthio-N(6)-dimethylallyladenosine synthase (457 aa).

The MTTase N-terminal domain maps to 3 to 120; that stretch reads KKVYVKTFGC…LPQMIDARRA (118 aa). Residues Cys-12, Cys-49, Cys-83, Cys-157, Cys-161, and Cys-164 each contribute to the [4Fe-4S] cluster site. Residues 143 to 377 form the Radical SAM core domain; the sequence is RVEGPSAFVS…QATIEENVAR (235 aa). The 68-residue stretch at 380-447 folds into the TRAM domain; sequence QSMVGKVERI…PHSLRGELLL (68 aa).

This sequence belongs to the methylthiotransferase family. MiaB subfamily. As to quaternary structure, monomer. The cofactor is [4Fe-4S] cluster.

It is found in the cytoplasm. The catalysed reaction is N(6)-dimethylallyladenosine(37) in tRNA + (sulfur carrier)-SH + AH2 + 2 S-adenosyl-L-methionine = 2-methylsulfanyl-N(6)-dimethylallyladenosine(37) in tRNA + (sulfur carrier)-H + 5'-deoxyadenosine + L-methionine + A + S-adenosyl-L-homocysteine + 2 H(+). Its function is as follows. Catalyzes the methylthiolation of N6-(dimethylallyl)adenosine (i(6)A), leading to the formation of 2-methylthio-N6-(dimethylallyl)adenosine (ms(2)i(6)A) at position 37 in tRNAs that read codons beginning with uridine. In Burkholderia vietnamiensis (strain G4 / LMG 22486) (Burkholderia cepacia (strain R1808)), this protein is tRNA-2-methylthio-N(6)-dimethylallyladenosine synthase.